The primary structure comprises 629 residues: Chaperone protein HtpG (629 aa).

The a; substrate-binding stretch occupies residues Met1–Arg337. The interval Glu338–Gln554 is b. The c stretch occupies residues Leu555–Gly629.

This sequence belongs to the heat shock protein 90 family. Homodimer.

It is found in the cytoplasm. Molecular chaperone. Has ATPase activity. The chain is Chaperone protein HtpG from Acidithiobacillus ferrooxidans (strain ATCC 23270 / DSM 14882 / CIP 104768 / NCIMB 8455) (Ferrobacillus ferrooxidans (strain ATCC 23270)).